A 193-amino-acid polypeptide reads, in one-letter code: Peptidyl-tRNA hydrolase (193 aa).

Tyr21 serves as a coordination point for tRNA. His26 acts as the Proton acceptor in catalysis. Residues Tyr72, Asn74, and Asn120 each contribute to the tRNA site.

The protein belongs to the PTH family. As to quaternary structure, monomer.

It is found in the cytoplasm. The enzyme catalyses an N-acyl-L-alpha-aminoacyl-tRNA + H2O = an N-acyl-L-amino acid + a tRNA + H(+). Functionally, hydrolyzes ribosome-free peptidyl-tRNAs (with 1 or more amino acids incorporated), which drop off the ribosome during protein synthesis, or as a result of ribosome stalling. Catalyzes the release of premature peptidyl moieties from peptidyl-tRNA molecules trapped in stalled 50S ribosomal subunits, and thus maintains levels of free tRNAs and 50S ribosomes. The sequence is that of Peptidyl-tRNA hydrolase from Nocardia farcinica (strain IFM 10152).